Consider the following 752-residue polypeptide: Photosystem I P700 chlorophyll a apoprotein A1 (752 aa).

Transmembrane regions (helical) follow at residues 73 to 96, 159 to 182, 198 to 222, 294 to 312, 349 to 372, 388 to 414, 436 to 458, and 533 to 551; these read IFSA…FHGA, LYVT…FHYH, LNHH…HVSA, IAHH…GHQY, WHAQ…HHMY, LCIF…IFMV, AIIS…LYIH, and FLIH…LILL. Positions 575 and 584 each coordinate [4Fe-4S] cluster. 2 helical membrane passes run 591 to 612 and 666 to 688; these read HVFL…HFSW and LSAY…MFLF. Histidine 677 provides a ligand contact to chlorophyll a'. Positions 685 and 693 each coordinate chlorophyll a. Tryptophan 694 contributes to the phylloquinone binding site. Residues 726-746 form a helical membrane-spanning segment; sequence AVGVAHYLLGGIATTWAFFHA.

It belongs to the PsaA/PsaB family. As to quaternary structure, the PsaA/B heterodimer binds the P700 chlorophyll special pair and subsequent electron acceptors. PSI consists of a core antenna complex that captures photons, and an electron transfer chain that converts photonic excitation into a charge separation. The cyanobacterial PSI reaction center is composed of one copy each of PsaA,B,C,D,E,F,I,J,K,L,M and X, and forms trimeric complexes. PSI electron transfer chain: 5 chlorophyll a, 1 chlorophyll a', 2 phylloquinones and 3 4Fe-4S clusters. PSI core antenna: 90 chlorophyll a, 22 carotenoids, 3 phospholipids and 1 galactolipid. P700 is a chlorophyll a/chlorophyll a' dimer, A0 is one or more chlorophyll a, A1 is one or both phylloquinones and FX is a shared 4Fe-4S iron-sulfur center. is required as a cofactor.

Its subcellular location is the cellular thylakoid membrane. It catalyses the reaction reduced [plastocyanin] + hnu + oxidized [2Fe-2S]-[ferredoxin] = oxidized [plastocyanin] + reduced [2Fe-2S]-[ferredoxin]. PsaA and PsaB bind P700, the primary electron donor of photosystem I (PSI), as well as the electron acceptors A0, A1 and FX. PSI is a plastocyanin/cytochrome c6-ferredoxin oxidoreductase, converting photonic excitation into a charge separation, which transfers an electron from the donor P700 chlorophyll pair to the spectroscopically characterized acceptors A0, A1, FX, FA and FB in turn. Oxidized P700 is reduced on the lumenal side of the thylakoid membrane by plastocyanin or cytochrome c6. In Nostoc punctiforme (strain ATCC 29133 / PCC 73102), this protein is Photosystem I P700 chlorophyll a apoprotein A1.